Reading from the N-terminus, the 340-residue chain is ATP synthase subunit a (340 aa).

An N-terminal signal peptide occupies residues Met-1–Ala-32. The next 6 helical transmembrane spans lie at His-107–Ser-127, Leu-172–Ala-192, Asn-197–Leu-217, Ala-236–Leu-256, Ile-269–Val-289, and Ile-296–Leu-316.

This sequence belongs to the ATPase A chain family. In terms of assembly, F-type ATPases have 2 components, CF(1) - the catalytic core - and CF(0) - the membrane proton channel. CF(1) has five subunits: alpha(3), beta(3), gamma(1), delta(1), epsilon(1). CF(0) has four main subunits: a, b, b' and c.

Its subcellular location is the cell inner membrane. Key component of the proton channel; it plays a direct role in the translocation of protons across the membrane. In Pelodictyon phaeoclathratiforme (strain DSM 5477 / BU-1), this protein is ATP synthase subunit a.